Consider the following 729-residue polypeptide: Fatty acid oxidation complex subunit alpha (729 aa).

The enoyl-CoA hydratase/isomerase stretch occupies residues 1 to 189; that stretch reads MLYKGDTLYL…KIGLVDGVVK (189 aa). A substrate-binding site is contributed by Asp296. A 3-hydroxyacyl-CoA dehydrogenase region spans residues 311-729; the sequence is ETPKQAAVLG…ARPVGSLKTA (419 aa). NAD(+) is bound by residues Met324, Asp343, 400-402, Lys407, and Ser429; that span reads VVE. Residue His450 is the For 3-hydroxyacyl-CoA dehydrogenase activity of the active site. Asn453 contributes to the NAD(+) binding site. Positions 500 and 660 each coordinate substrate. Positions 708 to 729 are disordered; that stretch reads RHNEPYYPPVEPARPVGSLKTA.

The protein in the N-terminal section; belongs to the enoyl-CoA hydratase/isomerase family. In the C-terminal section; belongs to the 3-hydroxyacyl-CoA dehydrogenase family. Heterotetramer of two alpha chains (FadB) and two beta chains (FadA).

It catalyses the reaction a (3S)-3-hydroxyacyl-CoA + NAD(+) = a 3-oxoacyl-CoA + NADH + H(+). The enzyme catalyses a (3S)-3-hydroxyacyl-CoA = a (2E)-enoyl-CoA + H2O. It carries out the reaction a 4-saturated-(3S)-3-hydroxyacyl-CoA = a (3E)-enoyl-CoA + H2O. The catalysed reaction is (3S)-3-hydroxybutanoyl-CoA = (3R)-3-hydroxybutanoyl-CoA. It catalyses the reaction a (3Z)-enoyl-CoA = a 4-saturated (2E)-enoyl-CoA. The enzyme catalyses a (3E)-enoyl-CoA = a 4-saturated (2E)-enoyl-CoA. Its pathway is lipid metabolism; fatty acid beta-oxidation. In terms of biological role, involved in the aerobic and anaerobic degradation of long-chain fatty acids via beta-oxidation cycle. Catalyzes the formation of 3-oxoacyl-CoA from enoyl-CoA via L-3-hydroxyacyl-CoA. It can also use D-3-hydroxyacyl-CoA and cis-3-enoyl-CoA as substrate. The protein is Fatty acid oxidation complex subunit alpha of Salmonella newport (strain SL254).